The primary structure comprises 61 residues: uncharacterized protein (61 aa).

2 helical membrane-spanning segments follow: residues 4–24 and 34–54; these read IIAFIWTFLLSHMACYLVASM and SSVIAVVLYVLIMVLAEIMPM.

Its subcellular location is the cell membrane. This is an uncharacterized protein from Bacillus subtilis (strain 168).